A 187-amino-acid polypeptide reads, in one-letter code: Small ribosomal subunit protein uS4 (187 aa).

Residues 105–174 enclose the S4 RNA-binding domain; it reads RRLQTLVFRK…DNHPERAKIV (70 aa).

The protein belongs to the universal ribosomal protein uS4 family. As to quaternary structure, part of the 30S ribosomal subunit. Contacts protein S5. The interaction surface between S4 and S5 is involved in control of translational fidelity.

Functionally, one of the primary rRNA binding proteins, it binds directly to 16S rRNA where it nucleates assembly of the body of the 30S subunit. With S5 and S12 plays an important role in translational accuracy. This chain is Small ribosomal subunit protein uS4, found in Methanocaldococcus jannaschii (strain ATCC 43067 / DSM 2661 / JAL-1 / JCM 10045 / NBRC 100440) (Methanococcus jannaschii).